The sequence spans 348 residues: Mitochondrial glycine transporter (348 aa).

Solcar repeat units follow at residues 10–94 (TKST…IREN), 130–214 (LSNT…SKQH), and 249–333 (RAAS…LIRR). The next 6 membrane-spanning stretches (helical) occupy residues 16–41 (FVAG…TRVQ), 69–95 (GTLP…RENA), 136–161 (LLAG…VRYE), 189–212 (GFGA…EKSK), 253–279 (INFA…KTRI), and 308–326 (GLAL…AWTV).

Belongs to the mitochondrial carrier (TC 2.A.29) family. SLC25A38 subfamily.

It is found in the mitochondrion inner membrane. It carries out the reaction glycine(in) = glycine(out). Functionally, mitochondrial glycine transporter that imports glycine into the mitochondrial matrix. Plays an important role in providing glycine for the first enzymatic step in heme biosynthesis, the condensation of glycine with succinyl-CoA to produce 5-aminolevulinate (ALA) in the mitochondrial matrix. The protein is Mitochondrial glycine transporter (mic-13) of Neurospora crassa (strain ATCC 24698 / 74-OR23-1A / CBS 708.71 / DSM 1257 / FGSC 987).